Reading from the N-terminus, the 367-residue chain is Protein valois (367 aa).

3 WD repeats span residues 101–139, 152–192, and 198–238; these read QAEHTVNIVRYAEDDFLLVALGDTRLQAWSTYSKVRDSQ, AHPT…MVST, and SHTD…PSST. The interval 309-367 is interaction with csul; it reads LAAMSNLPASVKVANVQAGHEFIYTHQDTHSRLTDAVWTDDSTLITIGHGRKMVTHAIK.

As to quaternary structure, interacts with csul and tud. In oocytes, localizes to pole plasm and nuage (at protein level). Expressed stronger in the germline than in somatic cells. In the germarium it sometimes concentrates in perinuclear aggregates that disappear by stage 2 of oogenesis. At later stages, it is uniformly distributed in the nurse cells and oocyte, as well as in young embryos, with no particular enrichment at the posterior or inside the pole cells (at protein level).

Its subcellular location is the cytoplasm. Functionally, involved in specific localization of cytoplasmic proteins during the formation of pole plasm. Required for synthesis and/or stability of oskar protein (osk) and localization of tudor (tud) in both the nuage and posterior pole of the oocyte. Required for normal posterior localization of osk in later stages of oogenesis and for posterior localization of the vasa (vas) protein during the entire process of pole plasm assembly. May act by regulating the complex that contains the arginine N-methyltransferase csul. In Drosophila melanogaster (Fruit fly), this protein is Protein valois (vls).